The following is a 298-amino-acid chain: ATP phosphoribosyltransferase (298 aa).

The protein belongs to the ATP phosphoribosyltransferase family. Long subfamily. The cofactor is Mg(2+).

It localises to the cytoplasm. It catalyses the reaction 1-(5-phospho-beta-D-ribosyl)-ATP + diphosphate = 5-phospho-alpha-D-ribose 1-diphosphate + ATP. It functions in the pathway amino-acid biosynthesis; L-histidine biosynthesis; L-histidine from 5-phospho-alpha-D-ribose 1-diphosphate: step 1/9. Feedback inhibited by histidine. Its function is as follows. Catalyzes the condensation of ATP and 5-phosphoribose 1-diphosphate to form N'-(5'-phosphoribosyl)-ATP (PR-ATP). Has a crucial role in the pathway because the rate of histidine biosynthesis seems to be controlled primarily by regulation of HisG enzymatic activity. The protein is ATP phosphoribosyltransferase of Vibrio vulnificus (strain CMCP6).